We begin with the raw amino-acid sequence, 160 residues long: Conopressin/conophysin, isoform 2 (160 aa).

The N-terminal stretch at 1 to 30 (MKCSVLQMSRLSWAMCLMLLMLLLLGTAQG) is a signal peptide. Cysteines 31 and 36 form a disulfide. Gly39 is subject to Glycine amide. A propeptide spanning residues 40–47 (GKRAVDAL) is cleaved from the precursor. Intrachain disulfides connect Cys53/Cys97, Cys56/Cys70, Cys64/Cys87, Cys71/Cys77, Cys104/Cys118, Cys112/Cys130, and Cys119/Cys124.

It belongs to the vasopressin/oxytocin family. Expressed by the venom gland.

It localises to the secreted. Targets vasopressin-oxytocin related receptors. The polypeptide is Conopressin/conophysin, isoform 2 (Conus monile (Necklace cone)).